A 476-amino-acid polypeptide reads, in one-letter code: MVATPSATTGLQVAQDYVIADINQAEFGRKELDIAETEMPGLMALREKYGTEKPLKGARIAGSLHMTIQTACLIETLVELGAEVRWASCNIFSTQDHAAAAMAARDIPVFAVKGETLEEYWEYTHRILEWGDGGSPNMILDDGGDATGLVMLGSKAEQDITVLDNPGNEEETFLFASIKKKLAQDPTFYSRTKAQIQGVTEETTTGVARLYKMQKSGELPFPAINVNDSVTKSKFDNLYGCRESLVDSIKRATDVMVAGKQALVMGYGDVGKGSAQSLRGLGATVCIAEVDPICALQAAMEGYRVVRLEDVVEDMDIFVTATGNYQVIRNEHLLKMKDEAIVCNIGHFDNEIDVASLKDYEWENIKPQVDHITLPSGNRIILLAEGRLVNLGCATGHPSFVMSNSFTNQVLAQIELFTKGNEYGKEVYVLPKHLDEMVARLHLDRIGAKLTELSKDQADYINVPVEGPFKPDHYRY.

Threonine 67, aspartate 142, and glutamate 202 together coordinate substrate. NAD(+) is bound at residue 203 to 205; it reads TTT. Substrate-binding residues include lysine 232 and aspartate 236. Residues asparagine 237, 266–271, glutamate 289, asparagine 324, 345–347, and asparagine 390 each bind NAD(+); these read GYGDVG and IGH.

The protein belongs to the adenosylhomocysteinase family. NAD(+) serves as cofactor.

The protein localises to the cytoplasm. It catalyses the reaction S-adenosyl-L-homocysteine + H2O = L-homocysteine + adenosine. The protein operates within amino-acid biosynthesis; L-homocysteine biosynthesis; L-homocysteine from S-adenosyl-L-homocysteine: step 1/1. May play a key role in the regulation of the intracellular concentration of adenosylhomocysteine. This Synechococcus sp. (strain WH7803) protein is Adenosylhomocysteinase.